We begin with the raw amino-acid sequence, 1043 residues long: Ack-related non-receptor tyrosine kinase (1043 aa).

In terms of domain architecture, Protein kinase spans 113-379 (ITLCKELGQG…SDIVAKFPER (267 aa)). Residues 119 to 127 (LGQGEFGSV) and Lys-146 each bind ATP. The active-site Proton acceptor is the Asp-241. An SH3 domain is found at 379 to 444 (RRAQSVRAVV…RPTDTVAHLG (66 aa)). Residues 443-481 (LGSEPPCSNGTIENGFSEKEKGGKKNKKAEKESERERKK) form a disordered region. Over residues 458–481 (FSEKEKGGKKNKKAEKESERERKK) the composition is skewed to basic and acidic residues. Residues 484–498 (ISEPVGDVRHTCHVG) enclose the CRIB domain. Disordered stretches follow at residues 514–644 (MCPT…SAAN), 790–842 (KINE…GWSS), 859–898 (KQAS…LSVR), and 932–993 (LIDG…RQFP). Over residues 516-543 (PTSSSPSTSRGSQASPAPSHTSSSTTSS) the composition is skewed to low complexity. Polar residues predominate over residues 610-624 (GNQHSVQVHDQFSSL). The span at 630–644 (SLTPTAPPLTASAAN) shows a compositional bias: low complexity. Positions 785–812 (EQEVRKINEKSAREHRKTEDLLREERQK) form a coiled coil. The span at 790–818 (KINEKSAREHRKTEDLLREERQKEQKPGE) shows a compositional bias: basic and acidic residues. Polar residues predominate over residues 825-842 (PAESLYSTRTPQQEGWSS). Residues 870-884 (PTSSRLSTLDRSSIS) are compositionally biased toward low complexity.

It belongs to the protein kinase superfamily. Tyr protein kinase family. Mg(2+) is required as a cofactor.

The enzyme catalyses L-tyrosyl-[protein] + ATP = O-phospho-L-tyrosyl-[protein] + ADP + H(+). The catalysed reaction is L-seryl-[protein] + ATP = O-phospho-L-seryl-[protein] + ADP + H(+). It carries out the reaction L-threonyl-[protein] + ATP = O-phospho-L-threonyl-[protein] + ADP + H(+). Functionally, probable tyrosine protein kinase which plays a role in vulva development, probably by acting as a negative regulator of the let-23/EGFR and let-60/ras pathway. Involved in the negative regulation of germline development. The protein is Ack-related non-receptor tyrosine kinase of Caenorhabditis elegans.